Consider the following 362-residue polypeptide: Cytochrome c peroxidase, mitochondrial (362 aa).

Residues 1–40 constitute a mitochondrion transit peptide; that stretch reads MASASRQILRAASRASTRTAFAPAASRGLAARTIAGRRFY. Catalysis depends on His-121, which acts as the Proton acceptor. His-244 is a binding site for heme b. The active-site Tryptophan radical intermediate is the Trp-260.

This sequence belongs to the peroxidase family. Cytochrome c peroxidase subfamily. Forms a one-to-one complex with cytochrome c. The cofactor is heme b.

It localises to the mitochondrion matrix. It is found in the mitochondrion intermembrane space. It carries out the reaction 2 Fe(II)-[cytochrome c] + H2O2 + 2 H(+) = 2 Fe(III)-[cytochrome c] + 2 H2O. Its function is as follows. Destroys radicals which are normally produced within the cells and which are toxic to biological systems. The chain is Cytochrome c peroxidase, mitochondrial (CCP1) from Pyricularia oryzae (strain 70-15 / ATCC MYA-4617 / FGSC 8958) (Rice blast fungus).